The chain runs to 417 residues: Serine hydroxymethyltransferase (417 aa).

(6S)-5,6,7,8-tetrahydrofolate is bound by residues L121 and 125–127 (GHL). Position 229 is an N6-(pyridoxal phosphate)lysine (K229). Residue 355–357 (SPF) coordinates (6S)-5,6,7,8-tetrahydrofolate.

The protein belongs to the SHMT family. In terms of assembly, homodimer. Requires pyridoxal 5'-phosphate as cofactor.

The protein resides in the cytoplasm. The enzyme catalyses (6R)-5,10-methylene-5,6,7,8-tetrahydrofolate + glycine + H2O = (6S)-5,6,7,8-tetrahydrofolate + L-serine. It participates in one-carbon metabolism; tetrahydrofolate interconversion. The protein operates within amino-acid biosynthesis; glycine biosynthesis; glycine from L-serine: step 1/1. Functionally, catalyzes the reversible interconversion of serine and glycine with tetrahydrofolate (THF) serving as the one-carbon carrier. This reaction serves as the major source of one-carbon groups required for the biosynthesis of purines, thymidylate, methionine, and other important biomolecules. Also exhibits THF-independent aldolase activity toward beta-hydroxyamino acids, producing glycine and aldehydes, via a retro-aldol mechanism. The polypeptide is Serine hydroxymethyltransferase (Shewanella putrefaciens (strain CN-32 / ATCC BAA-453)).